Consider the following 285-residue polypeptide: Shikimate dehydrogenase (NADP(+)) (285 aa).

Shikimate-binding positions include 19 to 21 (SLS) and Thr66. Residue Lys70 is the Proton acceptor of the active site. Residues Asn91 and Asp107 each coordinate shikimate. Residues 129-133 (GSGGA) and Leu228 contribute to the NADP(+) site. Position 230 (Tyr230) interacts with shikimate. An NADP(+)-binding site is contributed by Gly251.

This sequence belongs to the shikimate dehydrogenase family. Homodimer.

It catalyses the reaction shikimate + NADP(+) = 3-dehydroshikimate + NADPH + H(+). It participates in metabolic intermediate biosynthesis; chorismate biosynthesis; chorismate from D-erythrose 4-phosphate and phosphoenolpyruvate: step 4/7. Functionally, involved in the biosynthesis of the chorismate, which leads to the biosynthesis of aromatic amino acids. Catalyzes the reversible NADPH linked reduction of 3-dehydroshikimate (DHSA) to yield shikimate (SA). This chain is Shikimate dehydrogenase (NADP(+)), found in Prochlorococcus marinus subsp. pastoris (strain CCMP1986 / NIES-2087 / MED4).